The primary structure comprises 275 residues: Acetyl-coenzyme A carboxylase carboxyl transferase subunit beta (275 aa).

One can recognise a CoA carboxyltransferase N-terminal domain in the interval 18–275; sequence KDNAGPAVPS…IHRLGGEMHA (258 aa). The tract at residues 23 to 47 is disordered; the sequence is PAVPSNTHSSKSNGNPVSEMKENKR. Polar residues predominate over residues 26-38; the sequence is PSNTHSSKSNGNP.

Belongs to the AccD/PCCB family. In terms of assembly, acetyl-CoA carboxylase is a heterohexamer composed of biotin carboxyl carrier protein (AccB), biotin carboxylase (AccC) and two subunits each of ACCase subunit alpha (AccA) and ACCase subunit beta (AccD).

The protein resides in the cytoplasm. It carries out the reaction N(6)-carboxybiotinyl-L-lysyl-[protein] + acetyl-CoA = N(6)-biotinyl-L-lysyl-[protein] + malonyl-CoA. It participates in lipid metabolism; malonyl-CoA biosynthesis; malonyl-CoA from acetyl-CoA: step 1/1. Component of the acetyl coenzyme A carboxylase (ACC) complex. Biotin carboxylase (BC) catalyzes the carboxylation of biotin on its carrier protein (BCCP) and then the CO(2) group is transferred by the transcarboxylase to acetyl-CoA to form malonyl-CoA. The polypeptide is Acetyl-coenzyme A carboxylase carboxyl transferase subunit beta (Alkaliphilus oremlandii (strain OhILAs) (Clostridium oremlandii (strain OhILAs))).